Reading from the N-terminus, the 441-residue chain is Ribulose bisphosphate carboxylase large chain (441 aa).

Substrate-binding residues include Asn-89 and Thr-139. Lys-141 (proton acceptor) is an active-site residue. Lys-143 is a binding site for substrate. Mg(2+) is bound by residues Lys-167, Asp-169, and Glu-170. At Lys-167 the chain carries N6-carboxylysine. Residue His-260 is the Proton acceptor of the active site. Substrate-binding residues include Arg-261, His-293, and Ser-345.

This sequence belongs to the RuBisCO large chain family. Type I subfamily. As to quaternary structure, heterohexadecamer of 8 large chains and 8 small chains; disulfide-linked. The disulfide link is formed within the large subunit homodimers. The cofactor is Mg(2+). The disulfide bond which can form in the large chain dimeric partners within the hexadecamer appears to be associated with oxidative stress and protein turnover.

It localises to the plastid. It is found in the chloroplast. It carries out the reaction 2 (2R)-3-phosphoglycerate + 2 H(+) = D-ribulose 1,5-bisphosphate + CO2 + H2O. It catalyses the reaction D-ribulose 1,5-bisphosphate + O2 = 2-phosphoglycolate + (2R)-3-phosphoglycerate + 2 H(+). Functionally, ruBisCO catalyzes two reactions: the carboxylation of D-ribulose 1,5-bisphosphate, the primary event in carbon dioxide fixation, as well as the oxidative fragmentation of the pentose substrate in the photorespiration process. Both reactions occur simultaneously and in competition at the same active site. The protein is Ribulose bisphosphate carboxylase large chain of Fouquieria splendens (Ocotillo).